Consider the following 197-residue polypeptide: Holliday junction branch migration complex subunit RuvA (197 aa).

The interval 1–63 is domain I; that stretch reads MYAYLKGIIT…EDAHLLYGFR (63 aa). The domain II stretch occupies residues 64–142; that stretch reads SEDEKKLFLS…VAGDDLPAKV (79 aa). The interval 143-147 is flexible linker; sequence AVQAS. Residues 148 to 197 are domain III; that stretch reads AENQELEEAMEAMLALGYKATELKKIKKFFEGTTDTAENYIKSALKMLVK.

It belongs to the RuvA family. As to quaternary structure, homotetramer. Forms an RuvA(8)-RuvB(12)-Holliday junction (HJ) complex. HJ DNA is sandwiched between 2 RuvA tetramers; dsDNA enters through RuvA and exits via RuvB. An RuvB hexamer assembles on each DNA strand where it exits the tetramer. Each RuvB hexamer is contacted by two RuvA subunits (via domain III) on 2 adjacent RuvB subunits; this complex drives branch migration. In the full resolvosome a probable DNA-RuvA(4)-RuvB(12)-RuvC(2) complex forms which resolves the HJ.

Its subcellular location is the cytoplasm. Its function is as follows. The RuvA-RuvB-RuvC complex processes Holliday junction (HJ) DNA during genetic recombination and DNA repair, while the RuvA-RuvB complex plays an important role in the rescue of blocked DNA replication forks via replication fork reversal (RFR). RuvA specifically binds to HJ cruciform DNA, conferring on it an open structure. The RuvB hexamer acts as an ATP-dependent pump, pulling dsDNA into and through the RuvAB complex. HJ branch migration allows RuvC to scan DNA until it finds its consensus sequence, where it cleaves and resolves the cruciform DNA. This is Holliday junction branch migration complex subunit RuvA from Streptococcus pneumoniae (strain Hungary19A-6).